The following is a 691-amino-acid chain: Dipeptidyl peptidase 3 (691 aa).

H431 contributes to the Zn(2+) binding site. Residue E432 is part of the active site. H436 and E492 together coordinate Zn(2+).

Belongs to the peptidase M49 family. Requires Zn(2+) as cofactor.

The protein resides in the cytoplasm. It carries out the reaction Release of an N-terminal dipeptide from a peptide comprising four or more residues, with broad specificity. Also acts on dipeptidyl 2-naphthylamides.. The protein is Dipeptidyl peptidase 3 (dpp3-1) of Dictyostelium discoideum (Social amoeba).